Consider the following 208-residue polypeptide: UPF0637 protein Bcer98_2662 (208 aa).

This sequence belongs to the UPF0637 family.

This is UPF0637 protein Bcer98_2662 from Bacillus cytotoxicus (strain DSM 22905 / CIP 110041 / 391-98 / NVH 391-98).